Consider the following 310-residue polypeptide: Porphobilinogen deaminase (310 aa).

S-(dipyrrolylmethanemethyl)cysteine is present on C241.

Belongs to the HMBS family. As to quaternary structure, monomer. Dipyrromethane is required as a cofactor.

It catalyses the reaction 4 porphobilinogen + H2O = hydroxymethylbilane + 4 NH4(+). Its pathway is porphyrin-containing compound metabolism; protoporphyrin-IX biosynthesis; coproporphyrinogen-III from 5-aminolevulinate: step 2/4. Its function is as follows. Tetrapolymerization of the monopyrrole PBG into the hydroxymethylbilane pre-uroporphyrinogen in several discrete steps. This is Porphobilinogen deaminase from Lysinibacillus sphaericus (strain C3-41).